Here is a 209-residue protein sequence, read N- to C-terminus: MGKLYVFDHPLIQHKITYIRDKNTGTKDFRELVDEVASLMAFEITRDLPLKDIEIETPVSKATTKVIAGKKLGLIPILRAGLGMVDGILKLIPAAKVGHVGLYRDPKTLQPVEYYVKLPTDVEERDFIVLDPMLATGGSAAEAINSLKKRGAKQIKLMCIVAAPEGVKVVQEEHPDVDIYVAALDEKLNDHGYVVPGLGDAGDRLFGTK.

Residues R79, R104, and 131 to 139 contribute to the 5-phospho-alpha-D-ribose 1-diphosphate site; that span reads DPMLATGGS. Uracil contacts are provided by residues V194 and 199-201; that span reads GDA. Position 200 (D200) interacts with 5-phospho-alpha-D-ribose 1-diphosphate.

It belongs to the UPRTase family. It depends on Mg(2+) as a cofactor.

The enzyme catalyses UMP + diphosphate = 5-phospho-alpha-D-ribose 1-diphosphate + uracil. Its pathway is pyrimidine metabolism; UMP biosynthesis via salvage pathway; UMP from uracil: step 1/1. Its activity is regulated as follows. Allosterically activated by GTP. Functionally, catalyzes the conversion of uracil and 5-phospho-alpha-D-ribose 1-diphosphate (PRPP) to UMP and diphosphate. The chain is Uracil phosphoribosyltransferase from Bacillus cereus (strain Q1).